The following is a 484-amino-acid chain: tRNA-2-methylthio-N(6)-dimethylallyladenosine synthase (484 aa).

The MTTase N-terminal domain occupies 36 to 153 (GKLYIKTHGC…LPELIRARRE (118 aa)). Residues cysteine 45, cysteine 82, cysteine 116, cysteine 190, cysteine 194, and cysteine 197 each coordinate [4Fe-4S] cluster. The 240-residue stretch at 176 to 415 (RAEGPSAFVS…HISAHAASIS (240 aa)) folds into the Radical SAM core domain. In terms of domain architecture, TRAM spans 416–479 (QSMVGSVQRV…SNSLRGRIQL (64 aa)). Residues 428 to 450 (EGPSRRDPNELTGKSENMRPVNF) are disordered.

Belongs to the methylthiotransferase family. MiaB subfamily. In terms of assembly, monomer. Requires [4Fe-4S] cluster as cofactor.

It is found in the cytoplasm. It catalyses the reaction N(6)-dimethylallyladenosine(37) in tRNA + (sulfur carrier)-SH + AH2 + 2 S-adenosyl-L-methionine = 2-methylsulfanyl-N(6)-dimethylallyladenosine(37) in tRNA + (sulfur carrier)-H + 5'-deoxyadenosine + L-methionine + A + S-adenosyl-L-homocysteine + 2 H(+). In terms of biological role, catalyzes the methylthiolation of N6-(dimethylallyl)adenosine (i(6)A), leading to the formation of 2-methylthio-N6-(dimethylallyl)adenosine (ms(2)i(6)A) at position 37 in tRNAs that read codons beginning with uridine. The sequence is that of tRNA-2-methylthio-N(6)-dimethylallyladenosine synthase from Xanthomonas oryzae pv. oryzae (strain PXO99A).